The following is a 422-amino-acid chain: Dihydroorotase (422 aa).

Residues H59 and H61 each contribute to the Zn(2+) site. Substrate-binding positions include 61-63 and N93; that span reads HFR. Residues D150, H177, and H230 each coordinate Zn(2+). N276 is a substrate binding site. Residue D303 participates in Zn(2+) binding. D303 is an active-site residue. H307 provides a ligand contact to substrate.

Belongs to the metallo-dependent hydrolases superfamily. DHOase family. Class I DHOase subfamily. Zn(2+) serves as cofactor.

The catalysed reaction is (S)-dihydroorotate + H2O = N-carbamoyl-L-aspartate + H(+). Its pathway is pyrimidine metabolism; UMP biosynthesis via de novo pathway; (S)-dihydroorotate from bicarbonate: step 3/3. In terms of biological role, catalyzes the reversible cyclization of carbamoyl aspartate to dihydroorotate. The protein is Dihydroorotase of Streptococcus pyogenes serotype M1.